The primary structure comprises 350 residues: Zona pellucida-binding protein 1 (350 aa).

An N-terminal signal peptide occupies residues 1 to 44; it reads MEALAPGRAPRGRRRAGASGSVLSPLSLAAVLLCALLRAPPAVG. 3 N-linked (GlcNAc...) asparagine glycosylation sites follow: N113, N186, and N339.

This sequence belongs to the zona pellucida-binding protein Sp38 family. In terms of processing, N-glycosylated. In terms of tissue distribution, expressed in testis (at protein level). Expressed in male germ cells.

It is found in the cytoplasmic vesicle. The protein resides in the secretory vesicle. The protein localises to the acrosome. It localises to the acrosome membrane. Its subcellular location is the secreted. Plays a role in acrosome compaction and sperm morphogenesis. Is implicated in sperm-oocyte interaction during fertilization. This is Zona pellucida-binding protein 1 (Zpbp) from Mus musculus (Mouse).